The following is a 217-amino-acid chain: Octanoyltransferase (217 aa).

The 176-residue stretch at 32–207 (SDSPDELWIV…TLSQLLGYQQ (176 aa)) folds into the BPL/LPL catalytic domain. Substrate-binding positions include 71 to 78 (RGGQVTYH), 138 to 140 (SLG), and 151 to 153 (GLA). C169 functions as the Acyl-thioester intermediate in the catalytic mechanism.

It belongs to the LipB family.

It localises to the cytoplasm. It catalyses the reaction octanoyl-[ACP] + L-lysyl-[protein] = N(6)-octanoyl-L-lysyl-[protein] + holo-[ACP] + H(+). It participates in protein modification; protein lipoylation via endogenous pathway; protein N(6)-(lipoyl)lysine from octanoyl-[acyl-carrier-protein]: step 1/2. Functionally, catalyzes the transfer of endogenously produced octanoic acid from octanoyl-acyl-carrier-protein onto the lipoyl domains of lipoate-dependent enzymes. Lipoyl-ACP can also act as a substrate although octanoyl-ACP is likely to be the physiological substrate. This is Octanoyltransferase from Shewanella sp. (strain MR-7).